A 171-amino-acid polypeptide reads, in one-letter code: MAHFNECAHLIEGVDKAQNEYWDILGDEKDPLQVMLDMQRFLQIRLANVREYCYHPDKLETAGDVVSWMREQKDCIDDEFRELLTSLGEMSRGEKEASAVWKKWKARYIEAQEKRIDEMSPEDQLEIKFELVDIFHFVLNMFVGLGMNAEEIFKLYYLKNKHNFERQDNGY.

It catalyses the reaction dCTP + H2O = dCMP + diphosphate + H(+). This is dCTP pyrophosphatase (56) from Enterobacteria phage T4 (Bacteriophage T4).